Here is a 32-residue protein sequence, read N- to C-terminus: Photosystem II reaction center protein Z (32 aa).

Residues 9–31 (FILIGSASWAALVLLVGSLNSFV) traverse the membrane as a helical segment.

It belongs to the PsbZ family. PSII is composed of 1 copy each of membrane proteins PsbA, PsbB, PsbC, PsbD, PsbE, PsbF, PsbH, PsbI, PsbJ, PsbK, PsbL, PsbM, PsbT, PsbY, PsbZ, Psb30/Ycf12, at least 3 peripheral proteins of the oxygen-evolving complex and a large number of cofactors. It forms dimeric complexes.

It localises to the plastid. The protein localises to the chloroplast thylakoid membrane. May control the interaction of photosystem II (PSII) cores with the light-harvesting antenna, regulates electron flow through the 2 photosystem reaction centers. PSII is a light-driven water plastoquinone oxidoreductase, using light energy to abstract electrons from H(2)O, generating a proton gradient subsequently used for ATP formation. The sequence is that of Photosystem II reaction center protein Z from Euglena viridis (Cercaria viridis).